The primary structure comprises 272 residues: Proteasome assembly chaperone 1 (272 aa).

It belongs to the PSMG1 family. In terms of assembly, forms a heterodimer with psmg2.

In terms of biological role, chaperone protein which promotes assembly of the 20S proteasome as part of a heterodimer with psmg2. The polypeptide is Proteasome assembly chaperone 1 (psmG1) (Dictyostelium discoideum (Social amoeba)).